The primary structure comprises 244 residues: Phosphoadenosine 5'-phosphosulfate reductase (244 aa).

Catalysis depends on Cys239, which acts as the Nucleophile; cysteine thiosulfonate intermediate.

It belongs to the PAPS reductase family. CysH subfamily.

The protein resides in the cytoplasm. It carries out the reaction [thioredoxin]-disulfide + sulfite + adenosine 3',5'-bisphosphate + 2 H(+) = [thioredoxin]-dithiol + 3'-phosphoadenylyl sulfate. The protein operates within sulfur metabolism; hydrogen sulfide biosynthesis; sulfite from sulfate: step 3/3. Functionally, catalyzes the formation of sulfite from phosphoadenosine 5'-phosphosulfate (PAPS) using thioredoxin as an electron donor. The sequence is that of Phosphoadenosine 5'-phosphosulfate reductase from Yersinia pseudotuberculosis serotype O:1b (strain IP 31758).